The sequence spans 443 residues: Protein king tubby (443 aa).

2 disordered regions span residues 57-85 (TNGSPGGITPVAVNTSRNHSNNMRSLSTI) and 98-189 (HELE…ESEG). Positions 68–85 (AVNTSRNHSNNMRSLSTI) are enriched in polar residues. Low complexity predominate over residues 113–128 (QHQQSASHSANSTQSQ). Ser-136 is subject to Phosphoserine. Low complexity predominate over residues 148–160 (NRNVAAAAPVRPA). Residues 177-186 (NGTGNGTGGE) show a composition bias toward gly residues.

Belongs to the TUB family.

The protein resides in the cytoplasm. Its subcellular location is the nucleus. It localises to the cell projection. The protein localises to the cilium membrane. It is found in the rhabdomere. This Drosophila yakuba (Fruit fly) protein is Protein king tubby.